The primary structure comprises 60 residues: RICYSHKASLPRATKTCVENSCYKMFIRTSPDYISDRGCGCPTAMWPYQTACCKGDRCNK.

Cystine bridges form between C3/C22, C17/C39, C41/C52, and C53/C58. An important for binding to L-type calcium channels region spans residues 41–48 (CPTAMWPY).

This sequence belongs to the three-finger toxin family. Short-chain subfamily. L-type calcium blocker sub-subfamily. As to expression, expressed by the venom gland.

It is found in the secreted. Functionally, this specific blocker of the L-type calcium channel (Cav1/CACNA1) is a smooth muscle relaxant and an inhibitor of cardiac contractions. In Dendroaspis angusticeps (Eastern green mamba), this protein is Toxin C10S2C2.